A 158-amino-acid chain; its full sequence is Large ribosomal subunit protein bL19 (158 aa).

Positions 1 to 35 (MTADSKDTSMSEDNTETATAIENSSAMVTDVTSKS) are disordered. Positions 16-35 (ETATAIENSSAMVTDVTSKS) are enriched in polar residues.

This sequence belongs to the bacterial ribosomal protein bL19 family.

Functionally, this protein is located at the 30S-50S ribosomal subunit interface and may play a role in the structure and function of the aminoacyl-tRNA binding site. In Prochlorococcus marinus (strain MIT 9313), this protein is Large ribosomal subunit protein bL19.